We begin with the raw amino-acid sequence, 116 residues long: Protein TRACHEARY ELEMENT DIFFERENTIATION-RELATED 6 (116 aa).

Residues 1 to 24 are Extracellular-facing; it reads MASTDSVYRPTPTPDHDTTVVVVV. The helical transmembrane segment at 25–45 threads the bilayer; sequence FVSLGCVMFLAFLAFVIWFLI. The Cytoplasmic portion of the chain corresponds to 46-116; it reads KKRSRKHRER…GVGSSVVSRS (71 aa).

As to quaternary structure, interacts with CESA7/IRX3, a subunit of the secondary cell wall (SCW)-related cellulose synthase complex. In terms of tissue distribution, expressed preferentially in differentiating vessel elements in seedlings.

Its subcellular location is the cell membrane. The protein localises to the secreted. It is found in the cell wall. In terms of biological role, involved in the secondary cell wall (SCW) formation of vessel elements (e.g. protoxylem and metaxylem), thus promoting tracheary element (TE) differentiation. The protein is Protein TRACHEARY ELEMENT DIFFERENTIATION-RELATED 6 of Arabidopsis thaliana (Mouse-ear cress).